Consider the following 159-residue polypeptide: Succinate dehydrogenase assembly factor 2, mitochondrial (159 aa).

Residues 1 to 14 (MASFCLSRCCALRG) constitute a mitochondrion transit peptide.

This sequence belongs to the SDHAF2 family. As to quaternary structure, interacts with the flavoprotein subunit within the SDH catalytic dimer.

It localises to the mitochondrion matrix. Plays an essential role in the assembly of succinate dehydrogenase (SDH), an enzyme complex (also referred to as respiratory complex II) that is a component of both the tricarboxylic acid (TCA) cycle and the mitochondrial electron transport chain, and which couples the oxidation of succinate to fumarate with the reduction of ubiquinone (coenzyme Q) to ubiquinol. Required for flavinylation (covalent attachment of FAD) of the flavoprotein subunit of the SDH catalytic dimer. In Culex quinquefasciatus (Southern house mosquito), this protein is Succinate dehydrogenase assembly factor 2, mitochondrial.